Reading from the N-terminus, the 806-residue chain is Ribonucleoside-diphosphate reductase large subunit-like protein (806 aa).

This sequence belongs to the ribonucleoside diphosphate reductase large chain family.

It localises to the virion. It is found in the host cytoplasm. In terms of biological role, does not possess a ribonucleotide reductase activity. Betaherpesviruses probably use another strategy to expand the dNTP pool in a quiescent host cell. The protein is Ribonucleoside-diphosphate reductase large subunit-like protein of Human herpesvirus 7 (strain JI) (HHV-7).